The sequence spans 162 residues: Nucleotide-binding protein ACIAD3137 (162 aa).

This sequence belongs to the YajQ family.

Nucleotide-binding protein. The polypeptide is Nucleotide-binding protein ACIAD3137 (Acinetobacter baylyi (strain ATCC 33305 / BD413 / ADP1)).